Consider the following 322-residue polypeptide: Adenine deaminase (322 aa).

Residues His-11, His-13, and His-189 each coordinate Zn(2+). The active-site Proton donor is the Glu-192. Asp-270 contacts Zn(2+). Position 271 (Asp-271) interacts with substrate.

This sequence belongs to the metallo-dependent hydrolases superfamily. Adenosine and AMP deaminases family. Adenine deaminase type 2 subfamily. Zn(2+) is required as a cofactor.

It carries out the reaction adenine + H2O + H(+) = hypoxanthine + NH4(+). Functionally, catalyzes the hydrolytic deamination of adenine to hypoxanthine. Plays an important role in the purine salvage pathway and in nitrogen catabolism. This chain is Adenine deaminase, found in Rhizobium etli (strain ATCC 51251 / DSM 11541 / JCM 21823 / NBRC 15573 / CFN 42).